Reading from the N-terminus, the 97-residue chain is Putative pterin-4-alpha-carbinolamine dehydratase (97 aa).

It belongs to the pterin-4-alpha-carbinolamine dehydratase family.

The enzyme catalyses (4aS,6R)-4a-hydroxy-L-erythro-5,6,7,8-tetrahydrobiopterin = (6R)-L-erythro-6,7-dihydrobiopterin + H2O. This is Putative pterin-4-alpha-carbinolamine dehydratase from Opitutus terrae (strain DSM 11246 / JCM 15787 / PB90-1).